A 263-amino-acid chain; its full sequence is UDP-N-acetylenolpyruvoylglucosamine reductase (263 aa).

Residue Arg-146 is part of the active site. Ser-188 functions as the Proton donor in the catalytic mechanism. Residue Glu-258 is part of the active site.

The protein belongs to the MurB family. Requires FAD as cofactor.

It localises to the cytoplasm. The enzyme catalyses UDP-N-acetyl-alpha-D-muramate + NADP(+) = UDP-N-acetyl-3-O-(1-carboxyvinyl)-alpha-D-glucosamine + NADPH + H(+). The protein operates within cell wall biogenesis; peptidoglycan biosynthesis. Its function is as follows. Cell wall formation. The chain is UDP-N-acetylenolpyruvoylglucosamine reductase from Helicobacter hepaticus (strain ATCC 51449 / 3B1).